A 295-amino-acid chain; its full sequence is Nucleotide-binding protein MCA0739 (295 aa).

8-15 contacts ATP; that stretch reads GFSGSGKS. 60-63 serves as a coordination point for GTP; the sequence is DARN.

It belongs to the RapZ-like family.

Displays ATPase and GTPase activities. This Methylococcus capsulatus (strain ATCC 33009 / NCIMB 11132 / Bath) protein is Nucleotide-binding protein MCA0739.